The primary structure comprises 261 residues: Cytochrome c oxidase subunit 3 (261 aa).

The Mitochondrial matrix segment spans residues 1–15 (MTHQTHAYHMVNPSP). A helical membrane pass occupies residues 16–34 (WPLTGALSALLMTSGLTMW). Over 35–40 (FHFNSM) the chain is Mitochondrial intermembrane. The helical transmembrane segment at 41-66 (TLLMIGLTTNMLTMYQWWRDVIREST) threads the bilayer. Topologically, residues 67-72 (FQGHHT) are mitochondrial matrix. A helical membrane pass occupies residues 73 to 105 (PAVQKGLRYGMILFIISEVLFFTGFFWAFYHSS). Topologically, residues 106 to 128 (LAPTPELGGCWPPTGIHPLNPLE) are mitochondrial intermembrane. A helical membrane pass occupies residues 129–152 (VPLLNTSVLLASGVSITWAHHSLM). Topologically, residues 153–155 (EGD) are mitochondrial matrix. The chain crosses the membrane as a helical span at residues 156–183 (RKHMLQALFITITLGVYFTLLQASEYYE). The Mitochondrial intermembrane portion of the chain corresponds to 184-190 (APFTISD). Residues 191–223 (GVYGSTFFVATGFHGLHVIIGSTFLIVCFFRQL) traverse the membrane as a helical segment. Residues 224–232 (KFHFTSNHH) lie on the Mitochondrial matrix side of the membrane. A helical transmembrane segment spans residues 233–256 (FGFEAAAWYWHFVDVVWLFLYVSI). Over 257–261 (YWWGS) the chain is Mitochondrial intermembrane.

This sequence belongs to the cytochrome c oxidase subunit 3 family. As to quaternary structure, component of the cytochrome c oxidase (complex IV, CIV), a multisubunit enzyme composed of 14 subunits. The complex is composed of a catalytic core of 3 subunits MT-CO1, MT-CO2 and MT-CO3, encoded in the mitochondrial DNA, and 11 supernumerary subunits COX4I1 (or COX4I2), COX5A, COX5B, COX6A2 (or COX6A1), COX6B1 (or COX6B2), COX6C, COX7A1 (or COX7A2), COX7B, COX7C, COX8B and NDUFA4, which are encoded in the nuclear genome. The complex exists as a monomer or a dimer and forms supercomplexes (SCs) in the inner mitochondrial membrane with NADH-ubiquinone oxidoreductase (complex I, CI) and ubiquinol-cytochrome c oxidoreductase (cytochrome b-c1 complex, complex III, CIII), resulting in different assemblies (supercomplex SCI(1)III(2)IV(1) and megacomplex MCI(2)III(2)IV(2)).

Its subcellular location is the mitochondrion inner membrane. The enzyme catalyses 4 Fe(II)-[cytochrome c] + O2 + 8 H(+)(in) = 4 Fe(III)-[cytochrome c] + 2 H2O + 4 H(+)(out). Functionally, component of the cytochrome c oxidase, the last enzyme in the mitochondrial electron transport chain which drives oxidative phosphorylation. The respiratory chain contains 3 multisubunit complexes succinate dehydrogenase (complex II, CII), ubiquinol-cytochrome c oxidoreductase (cytochrome b-c1 complex, complex III, CIII) and cytochrome c oxidase (complex IV, CIV), that cooperate to transfer electrons derived from NADH and succinate to molecular oxygen, creating an electrochemical gradient over the inner membrane that drives transmembrane transport and the ATP synthase. Cytochrome c oxidase is the component of the respiratory chain that catalyzes the reduction of oxygen to water. Electrons originating from reduced cytochrome c in the intermembrane space (IMS) are transferred via the dinuclear copper A center (CU(A)) of subunit 2 and heme A of subunit 1 to the active site in subunit 1, a binuclear center (BNC) formed by heme A3 and copper B (CU(B)). The BNC reduces molecular oxygen to 2 water molecules using 4 electrons from cytochrome c in the IMS and 4 protons from the mitochondrial matrix. The protein is Cytochrome c oxidase subunit 3 (MT-CO3) of Bos taurus (Bovine).